We begin with the raw amino-acid sequence, 451 residues long: Tubulin alpha chain (451 aa).

Glutamine 11 is a GTP binding site. N6-acetyllysine is present on lysine 40. Residues glutamate 71, glycine 144, threonine 145, threonine 179, asparagine 206, and asparagine 228 each contribute to the GTP site. Mg(2+) is bound at residue glutamate 71. The active site involves glutamate 254. A disordered region spans residues 432–451; sequence YEEVGAESAEGDDEDEGEDY.

The protein belongs to the tubulin family. As to quaternary structure, dimer of alpha and beta chains. A typical microtubule is a hollow water-filled tube with an outer diameter of 25 nm and an inner diameter of 15 nM. Alpha-beta heterodimers associate head-to-tail to form protofilaments running lengthwise along the microtubule wall with the beta-tubulin subunit facing the microtubule plus end conferring a structural polarity. Microtubules usually have 13 protofilaments but different protofilament numbers can be found in some organisms and specialized cells. Mg(2+) serves as cofactor. In terms of processing, undergoes a tyrosination/detyrosination cycle, the cyclic removal and re-addition of a C-terminal tyrosine residue by the enzymes tubulin tyrosine carboxypeptidase (TTCP) and tubulin tyrosine ligase (TTL), respectively. Acetylation of alpha chains at Lys-40 stabilizes microtubules and affects affinity and processivity of microtubule motors. This modification has a role in multiple cellular functions, ranging from cell motility, cell cycle progression or cell differentiation to intracellular trafficking and signaling.

It is found in the cytoplasm. It localises to the cytoskeleton. The enzyme catalyses GTP + H2O = GDP + phosphate + H(+). Its function is as follows. Tubulin is the major constituent of microtubules, a cylinder consisting of laterally associated linear protofilaments composed of alpha- and beta-tubulin heterodimers. Microtubules grow by the addition of GTP-tubulin dimers to the microtubule end, where a stabilizing cap forms. Below the cap, tubulin dimers are in GDP-bound state, owing to GTPase activity of alpha-tubulin. This chain is Tubulin alpha chain (TBA), found in Daucus carota (Wild carrot).